A 349-amino-acid polypeptide reads, in one-letter code: Putative transport protein jhp_0514 (349 aa).

Helical transmembrane passes span Phe-6–Leu-26, Met-27–Asn-47, Ser-56–Tyr-76, Leu-143–Gly-163, Val-195–Ile-215, Leu-224–Ile-244, Glu-258–Ile-278, and Ile-300–Val-320.

The protein belongs to the autoinducer-2 exporter (AI-2E) (TC 2.A.86) family.

Its subcellular location is the cell membrane. This Helicobacter pylori (strain J99 / ATCC 700824) (Campylobacter pylori J99) protein is Putative transport protein jhp_0514.